The primary structure comprises 233 residues: Apoptosis regulator Bcl-2 (233 aa).

The BH4 motif lies at 10–30; that stretch reads DNREIVLKYIHYKLSQRGYDW. Positions 32 to 86 are disordered; that stretch reads AGEDRPPVPPAPAPAAAPAAVAAAGASSHHRPEPPGSAAASEVPPAEGLRPAPPG. A BH3 motif is present at residues 87–101; the sequence is VHLALRQAGDEFSRR. Residues 130–149 carry the BH1 motif; the sequence is ELFRDGVNWGRIVAFFEFGG. Positions 181–196 match the BH2 motif; the sequence is NWIQDNGGWDAFVELY. A helical membrane pass occupies residues 208–228; it reads WISLKTILSLVLVGACITLGA.

This sequence belongs to the Bcl-2 family. In terms of assembly, forms homodimers, and heterodimers with BAX, BAD, BAK and Bcl-X(L). Heterodimerization with BAX requires intact BH1 and BH2 motifs, and is necessary for anti-apoptotic activity. Also interacts with APAF1 and RAF-1. As to expression, in adult chicken expressed, in thymus, spleen, kidney, heart, ovary and brain, with the highest levels in the thymus. In the embryo, highly levels expressed in all tissues with high levels in the bursa of Fabricius.

Its subcellular location is the mitochondrion outer membrane. The protein localises to the nucleus membrane. It is found in the endoplasmic reticulum membrane. The protein resides in the cytoplasm. In terms of biological role, suppresses apoptosis in a variety of cell systems including factor-dependent lymphohematopoietic and neural cells. Regulates cell death by controlling the mitochondrial membrane permeability. Appears to function in a feedback loop system with caspases. Inhibits caspase activity either by preventing the release of cytochrome c from the mitochondria and/or by binding to the apoptosis-activating factor (APAF-1). In Gallus gallus (Chicken), this protein is Apoptosis regulator Bcl-2 (BCL2).